A 952-amino-acid chain; its full sequence is Ubiquitin carboxyl-terminal hydrolase CYLD (952 aa).

The interval 106–589 (CEERLSLFRN…LEIMIGKKKG (484 aa)) is interaction with TRIP. 2 consecutive CAP-Gly domains span residues 153–198 (LAER…VFVA) and 253–286 (DVLP…VQLC). A disordered region spans residues 311–350 (RRPPKLAFMSRGVGDKGSSSHNKPKVTGSTSDPGSRNRSE). The span at 327–346 (GSSSHNKPKVTGSTSDPGSR) shows a compositional bias: polar residues. A Phosphoserine modification is found at Ser-383. Residues 386 to 409 (EMSSDFGHSSPPPQPPSMNSLSSE) form a disordered region. The segment at 390-465 (DFGHSSPPPQ…LPISSGNAHG (76 aa)) is interaction with TRAF2. Residues Ser-414 and Ser-418 each carry the phosphoserine modification. Positions 466 to 680 (LEVGSLAEVK…FTSEEKDPEE (215 aa)) are interaction with IKBKG/NEMO. Positions 488–531 (GQPPGLSDVLAGLELEDECAGCTDGTFRGTRYFTCALKKALFVK) constitute a CAP-Gly 3 domain. The region spanning 588-946 (KGIQGHYNSC…DAYMCMYQSP (359 aa)) is the USP domain. Cys-597 functions as the Nucleophile in the catalytic mechanism. The segment at 777 to 829 (LEDTPRQCRICGGLAMYECRECYDDPDISAGKIKQFCKTCSTQVHLHPRRLNH) is B-box. Positions 784, 787, 795, 798, 813, 816, 821, and 829 each coordinate Zn(2+). His-867 serves as the catalytic Proton acceptor.

It belongs to the peptidase C19 family. As to quaternary structure, interacts (via CAP-Gly domain) with IKBKG/NEMO (via proline-rich C-terminal region). Interacts with TRAF2 and TRIP. Interacts with PLK1, DVL1, DVL3, MAVS, TBK1, IKKE and RIGI. Interacts (via CAP-Gly domain) with microtubules. Interacts with HDAC6 and BCL3. Interacts with MAP3K7. Identified in a complex with TRAF6 and SQSTM1. Interacts with OPTN and SQSTM1. Interacts with CEP350. Interacts with RNF31; the interaction is indirect and is mediated via SPATA2. Interacts with SPATA2 (via the PUB domain); the interaction is direct and recruits CYLD to the LUBAC complex, thereby regulating TNF-alpha-induced necroptosis. In terms of processing, phosphorylated on several serine residues by IKKA and/or IKKB in response to immune stimuli. Phosphorylation requires IKBKG. Phosphorylation abolishes TRAF2 deubiquitination, interferes with the activation of Jun kinases, and strongly reduces CD40-dependent gene activation by NF-kappa-B. Ubiquitinated. Polyubiquitinated in hepatocytes treated with palmitic acid. Ubiquitination is mediated by E3 ligase TRIM47 and leads to proteasomal degradation.

It localises to the cytoplasm. It is found in the perinuclear region. Its subcellular location is the cytoskeleton. The protein localises to the cell membrane. The protein resides in the microtubule organizing center. It localises to the centrosome. It is found in the spindle. Its subcellular location is the cilium basal body. The catalysed reaction is Thiol-dependent hydrolysis of ester, thioester, amide, peptide and isopeptide bonds formed by the C-terminal Gly of ubiquitin (a 76-residue protein attached to proteins as an intracellular targeting signal).. Functionally, deubiquitinase that specifically cleaves 'Lys-63'- and linear 'Met-1'-linked polyubiquitin chains and is involved in NF-kappa-B activation and TNF-alpha-induced necroptosis. Negatively regulates NF-kappa-B activation by deubiquitinating upstream signaling factors. Contributes to the regulation of cell survival, proliferation and differentiation via its effects on NF-kappa-B activation. Negative regulator of Wnt signaling. Inhibits HDAC6 and thereby promotes acetylation of alpha-tubulin and stabilization of microtubules. Plays a role in the regulation of microtubule dynamics, and thereby contributes to the regulation of cell proliferation, cell polarization, cell migration, and angiogenesis. Required for normal cell cycle progress and normal cytokinesis. Inhibits nuclear translocation of NF-kappa-B. Plays a role in the regulation of inflammation and the innate immune response, via its effects on NF-kappa-B activation. Dispensable for the maturation of intrathymic natural killer cells, but required for the continued survival of immature natural killer cells. Negatively regulates TNFRSF11A signaling and osteoclastogenesis. Involved in the regulation of ciliogenesis, allowing ciliary basal bodies to migrate and dock to the plasma membrane; this process does not depend on NF-kappa-B activation. Ability to remove linear ('Met-1'-linked) polyubiquitin chains regulates innate immunity and TNF-alpha-induced necroptosis: recruited to the LUBAC complex via interaction with SPATA2 and restricts linear polyubiquitin formation on target proteins. Regulates innate immunity by restricting linear polyubiquitin formation on RIPK2 in response to NOD2 stimulation. Involved in TNF-alpha-induced necroptosis by removing linear ('Met-1'-linked) polyubiquitin chains from RIPK1, thereby regulating the kinase activity of RIPK1. Negatively regulates intestinal inflammation by removing 'Lys-63' linked polyubiquitin chain of NLRP6, thereby reducing the interaction between NLRP6 and PYCARD/ASC and formation of the NLRP6 inflammasome. Does not catalyze deubiquitination of heterotypic 'Lys-63'-/'Lys-48'-linked branched ubiquitin chains. Removes 'Lys-63' linked polyubiquitin chain of MAP3K7, which inhibits phosphorylation and blocks downstream activation of the JNK-p38 kinase cascades. Also removes 'Lys-63'-linked polyubiquitin chains of MAP3K1 and MA3P3K3, which inhibit their interaction with MAP2K1 and MAP2K2. The polypeptide is Ubiquitin carboxyl-terminal hydrolase CYLD (Cyld) (Mus musculus (Mouse)).